A 186-amino-acid chain; its full sequence is Holliday junction branch migration complex subunit RuvA (186 aa).

Positions 1–61 (MYRYIKGIVT…EDIFQLYGFK (61 aa)) are domain I. The domain II stretch occupies residues 62 to 134 (DEETLNLFLK…LKGKLVNDEL (73 aa)). The segment at 134–137 (LDMQ) is flexible linker. Residues 138-186 (LLSDNSKDVAAALEALGYNKKEIAKSLKHVNFDQDLNKALKEALAILLK) form a domain III region.

This sequence belongs to the RuvA family. As to quaternary structure, homotetramer. Forms an RuvA(8)-RuvB(12)-Holliday junction (HJ) complex. HJ DNA is sandwiched between 2 RuvA tetramers; dsDNA enters through RuvA and exits via RuvB. An RuvB hexamer assembles on each DNA strand where it exits the tetramer. Each RuvB hexamer is contacted by two RuvA subunits (via domain III) on 2 adjacent RuvB subunits; this complex drives branch migration. In the full resolvosome a probable DNA-RuvA(4)-RuvB(12)-RuvC(2) complex forms which resolves the HJ.

The protein resides in the cytoplasm. Its function is as follows. The RuvA-RuvB-RuvC complex processes Holliday junction (HJ) DNA during genetic recombination and DNA repair, while the RuvA-RuvB complex plays an important role in the rescue of blocked DNA replication forks via replication fork reversal (RFR). RuvA specifically binds to HJ cruciform DNA, conferring on it an open structure. The RuvB hexamer acts as an ATP-dependent pump, pulling dsDNA into and through the RuvAB complex. HJ branch migration allows RuvC to scan DNA until it finds its consensus sequence, where it cleaves and resolves the cruciform DNA. This is Holliday junction branch migration complex subunit RuvA from Acholeplasma laidlawii (strain PG-8A).